A 439-amino-acid chain; its full sequence is Homogentisate 1,2-dioxygenase (439 aa).

Residue histidine 289 is the Proton acceptor of the active site. Fe cation contacts are provided by histidine 332 and glutamate 338. Homogentisate contacts are provided by tyrosine 347 and histidine 368. Fe cation is bound at residue histidine 368.

It belongs to the homogentisate dioxygenase family. Hexamer; dimer of trimers. Fe cation is required as a cofactor.

The catalysed reaction is homogentisate + O2 = 4-maleylacetoacetate + H(+). Its pathway is amino-acid degradation; L-phenylalanine degradation; acetoacetate and fumarate from L-phenylalanine: step 4/6. Its function is as follows. Involved in the catabolism of homogentisate (2,5-dihydroxyphenylacetate or 2,5-OH-PhAc), a central intermediate in the degradation of phenylalanine and tyrosine. Catalyzes the oxidative ring cleavage of the aromatic ring of homogentisate to yield maleylacetoacetate. In Xanthomonas euvesicatoria pv. vesicatoria (strain 85-10) (Xanthomonas campestris pv. vesicatoria), this protein is Homogentisate 1,2-dioxygenase.